Consider the following 407-residue polypeptide: Na(+)-translocating NADH-quinone reductase subunit F (407 aa).

The helical transmembrane segment at 3–23 threads the bilayer; it reads IILGVVMFTLIVLALVLVILF. The region spanning 32–126 is the 2Fe-2S ferredoxin-type domain; it reads GDITISINGD…DMDIELPEEI (95 aa). The [2Fe-2S] cluster site is built by Cys-69, Cys-75, Cys-78, and Cys-110. Residues 129–269 enclose the FAD-binding FR-type domain; the sequence is VKKWECTVIS…SGPFGEFFAK (141 aa). Residues 272-389 are catalytic; it reads DAEMVFIGGG…PMMNAAVIGM (118 aa).

Belongs to the NqrF family. In terms of assembly, composed of six subunits; NqrA, NqrB, NqrC, NqrD, NqrE and NqrF. [2Fe-2S] cluster is required as a cofactor. FAD serves as cofactor.

It is found in the cell inner membrane. The catalysed reaction is a ubiquinone + n Na(+)(in) + NADH + H(+) = a ubiquinol + n Na(+)(out) + NAD(+). Functionally, NQR complex catalyzes the reduction of ubiquinone-1 to ubiquinol by two successive reactions, coupled with the transport of Na(+) ions from the cytoplasm to the periplasm. The first step is catalyzed by NqrF, which accepts electrons from NADH and reduces ubiquinone-1 to ubisemiquinone by a one-electron transfer pathway. The chain is Na(+)-translocating NADH-quinone reductase subunit F from Vibrio vulnificus (strain CMCP6).